We begin with the raw amino-acid sequence, 241 residues long: 3-dehydroquinate dehydratase (241 aa).

3-dehydroquinate contacts are provided by residues 35 to 37 (ELR) and R70. Catalysis depends on H132, which acts as the Proton donor/acceptor. The active-site Schiff-base intermediate with substrate is K159. Residues R201 and Q224 each coordinate 3-dehydroquinate.

This sequence belongs to the type-I 3-dehydroquinase family. Homodimer.

It catalyses the reaction 3-dehydroquinate = 3-dehydroshikimate + H2O. It functions in the pathway metabolic intermediate biosynthesis; chorismate biosynthesis; chorismate from D-erythrose 4-phosphate and phosphoenolpyruvate: step 3/7. Its function is as follows. Involved in the third step of the chorismate pathway, which leads to the biosynthesis of aromatic amino acids. Catalyzes the cis-dehydration of 3-dehydroquinate (DHQ) and introduces the first double bond of the aromatic ring to yield 3-dehydroshikimate. This Staphylococcus carnosus (strain TM300) protein is 3-dehydroquinate dehydratase.